We begin with the raw amino-acid sequence, 220 residues long: MVENVTYSEDGQLLKLKWEDVYEQFKNLITFAARQQMENNGADTMMSRQDLEQEGLLKLYDCWEKWCFKENKQMDEFGPIFRKSLFRKVKQSGGTGRALGFVAIDDEDNPLENMLKDENTVDVVEKIHFSEGLEKLKETLESDIAKSLLEELINPSDQTIYNVLIDIERKKMLKSQGHRVNVPKDTTVRMKHIDQTLGISNKQYDSELKKFVKRLTIYTI.

Sigma factors are initiation factors that promote the attachment of RNA polymerase to specific initiation sites and are then released. This sigma factor is responsible for the expression of the phage middle genes. This Bacillus subtilis (Bacteriophage SP01) protein is RNA polymerase sigma GP28 factor (28).